A 908-amino-acid chain; its full sequence is Protein translocase subunit SecA (908 aa).

Residues glutamine 87, 105 to 109, and aspartate 512 each bind ATP; that span reads GEGKT. The disordered stretch occupies residues 866–908; it reads GSDEDDAIAAHTPMIRDGDKVGRNDPCPCGSGRKYKQCHGKLS. The segment covering 879–888 has biased composition (basic and acidic residues); that stretch reads MIRDGDKVGR. The Zn(2+) site is built by cysteine 892, cysteine 894, cysteine 903, and histidine 904. A compositionally biased stretch (basic residues) spans 898 to 908; the sequence is RKYKQCHGKLS.

This sequence belongs to the SecA family. Monomer and homodimer. Part of the essential Sec protein translocation apparatus which comprises SecA, SecYEG and auxiliary proteins SecDF-YajC and YidC. Zn(2+) is required as a cofactor.

The protein localises to the cell inner membrane. It localises to the cytoplasm. The enzyme catalyses ATP + H2O + cellular proteinSide 1 = ADP + phosphate + cellular proteinSide 2.. Functionally, part of the Sec protein translocase complex. Interacts with the SecYEG preprotein conducting channel. Has a central role in coupling the hydrolysis of ATP to the transfer of proteins into and across the cell membrane, serving both as a receptor for the preprotein-SecB complex and as an ATP-driven molecular motor driving the stepwise translocation of polypeptide chains across the membrane. The chain is Protein translocase subunit SecA from Shewanella oneidensis (strain ATCC 700550 / JCM 31522 / CIP 106686 / LMG 19005 / NCIMB 14063 / MR-1).